We begin with the raw amino-acid sequence, 354 residues long: 5,10-methenyltetrahydromethanopterin hydrogenase (354 aa).

It belongs to the HMD family.

The enzyme catalyses 5,10-methenyl-5,6,7,8-tetrahydromethanopterin + H2 = 5,10-methylenetetrahydromethanopterin + H(+). The protein operates within one-carbon metabolism; methanogenesis from CO(2); 5,10-methylene-5,6,7,8-tetrahydromethanopterin from 5,10-methenyl-5,6,7,8-tetrahydromethanopterin (hydrogen route): step 1/1. Catalyzes the reversible reduction of methenyl-H(4)MPT(+) to methylene-H(4)MPT. In Methanococcus vannielii (strain ATCC 35089 / DSM 1224 / JCM 13029 / OCM 148 / SB), this protein is 5,10-methenyltetrahydromethanopterin hydrogenase.